Here is a 155-residue protein sequence, read N- to C-terminus: Nucleoside diphosphate kinase, cytosolic (155 aa).

ATP-binding residues include lysine 16, phenylalanine 64, arginine 92, threonine 98, arginine 109, and asparagine 119. Histidine 122 serves as the catalytic Pros-phosphohistidine intermediate.

The protein belongs to the NDK family. As to quaternary structure, homohexamer. Requires Mg(2+) as cofactor.

The protein localises to the cytoplasm. It catalyses the reaction a 2'-deoxyribonucleoside 5'-diphosphate + ATP = a 2'-deoxyribonucleoside 5'-triphosphate + ADP. The enzyme catalyses a ribonucleoside 5'-diphosphate + ATP = a ribonucleoside 5'-triphosphate + ADP. In terms of biological role, major role in the synthesis of nucleoside triphosphates other than ATP. The polypeptide is Nucleoside diphosphate kinase, cytosolic (ndkC-1) (Dictyostelium discoideum (Social amoeba)).